Here is a 421-residue protein sequence, read N- to C-terminus: Inner membrane transport protein YdiN (421 aa).

At 1 to 9 the chain is on the cytoplasmic side; the sequence is MSQNKAFST. The chain crosses the membrane as a helical span at residues 10-30; the sequence is PFILAVLCIYFSYFLHGISVI. Residues 31 to 49 are Periplasmic-facing; that stretch reads TLAQNMSSLAEKFSTDNAG. The helical transmembrane segment at 50–70 threads the bilayer; sequence IAYLISGIGLGRLISILFFGV. Over 71–78 the chain is Cytoplasmic; that stretch reads ISDKFGRR. Residues 79–99 form a helical membrane-spanning segment; sequence AVILMAVIMYLLFFFGIPACP. Residue asparagine 100 is a topological domain, periplasmic. Residues 101 to 121 traverse the membrane as a helical segment; sequence LTLAYGLAVCVGIANSALDTG. Residues 122–136 lie on the Cytoplasmic side of the membrane; that stretch reads GYPALMECFPKASGS. Residues 137-157 form a helical membrane-spanning segment; sequence AVILVKAMVSFGQMFYPMLVS. At 158–163 the chain is on the periplasmic side; it reads YMLLNN. The helical transmembrane segment at 164–184 threads the bilayer; it reads IWYGYGLIIPGILFVLITLML. Residues 185–215 are Cytoplasmic-facing; the sequence is LKSKFPSQLVDASVTNELPQMNSKPLVWLEG. The helical transmembrane segment at 216–236 threads the bilayer; that stretch reads VSSVLFGVAAFSTFYVIVVWM. The Periplasmic portion of the chain corresponds to 237-251; the sequence is PKYAMAFAGMSEAEA. The chain crosses the membrane as a helical span at residues 252–272; the sequence is LKTISYYSMGSLVCVFIFAAL. Topologically, residues 273–279 are cytoplasmic; sequence LKKMVRP. The helical transmembrane segment at 280 to 300 threads the bilayer; the sequence is IWANVFNSALATITAAIIYLY. Residues 301 to 308 are Periplasmic-facing; the sequence is PSPLVCNA. A helical transmembrane segment spans residues 309–329; the sequence is GAFVIGFSAAGGILQLGVSVM. Residues 330–342 are Cytoplasmic-facing; the sequence is SEFFPKSKAKVTS. Residues 343–363 form a helical membrane-spanning segment; the sequence is IYMMMGGLANFVIPLITGYLS. The Periplasmic segment spans residues 364 to 369; it reads NIGLQY. A helical membrane pass occupies residues 370 to 390; the sequence is IIVLDFTFALLALITAIIVFI. At 391–421 the chain is on the cytoplasmic side; sequence RYYRVFIIPENDVRFGERKFCTRLNTIKHRG.

This sequence belongs to the major facilitator superfamily.

The protein localises to the cell inner membrane. The protein is Inner membrane transport protein YdiN (ydiN) of Escherichia coli (strain K12).